We begin with the raw amino-acid sequence, 397 residues long: Beta-lactamase (397 aa).

A signal peptide spans 1–26 (MRDTRFPCLCGIAASTLLFATTPAIA). The Acyl-ester intermediate role is filled by Ser-90. A beta-lactam contacts are provided by Ser-90, Gln-146, Tyr-177, Asn-179, and Asn-370. The active-site Proton acceptor is the Tyr-177.

Belongs to the class-C beta-lactamase family. In terms of assembly, monomer.

Its subcellular location is the periplasm. It catalyses the reaction a beta-lactam + H2O = a substituted beta-amino acid. Functionally, class C beta-lactamase which confers resistance to penicillins and cephalosporins. Has nitrocefin-hydrolyzing activity. The chain is Beta-lactamase (ampC) from Pseudomonas aeruginosa (strain ATCC 15692 / DSM 22644 / CIP 104116 / JCM 14847 / LMG 12228 / 1C / PRS 101 / PAO1).